The sequence spans 351 residues: Glycerol-1-phosphate dehydrogenase [NAD(P)+] (351 aa).

NAD(+) is bound by residues 97–101 and 119–122; these read GKVID and TSPS. Asp-124 serves as a coordination point for substrate. Ser-128 provides a ligand contact to NAD(+). Asp-171 provides a ligand contact to substrate. The Zn(2+) site is built by Asp-171 and His-251. Residue His-255 participates in substrate binding. His-267 serves as a coordination point for Zn(2+).

This sequence belongs to the glycerol-1-phosphate dehydrogenase family. Homodimer. Requires Zn(2+) as cofactor.

It localises to the cytoplasm. It catalyses the reaction sn-glycerol 1-phosphate + NAD(+) = dihydroxyacetone phosphate + NADH + H(+). It carries out the reaction sn-glycerol 1-phosphate + NADP(+) = dihydroxyacetone phosphate + NADPH + H(+). It functions in the pathway membrane lipid metabolism; glycerophospholipid metabolism. Functionally, catalyzes the NAD(P)H-dependent reduction of dihydroxyacetonephosphate (DHAP or glycerone phosphate) to glycerol 1-phosphate (G1P). The G1P thus generated is used as the glycerophosphate backbone of phospholipids in the cellular membranes of Archaea. The chain is Glycerol-1-phosphate dehydrogenase [NAD(P)+] from Saccharolobus islandicus (strain L.S.2.15 / Lassen #1) (Sulfolobus islandicus).